A 484-amino-acid chain; its full sequence is MTGILVAGTSSDAGKSLVVTALCRVARRRGVDVVPFKAQNMSNNSMVCADGSEIGRAQYLQATAAGVTPTSAMNPVLLKPGTDRRSFVVLRGKPGGVLEAGEYTTGRRYLAEAAWAAYDELAASHDMVICEGAGSPAEINLRRGDYTNMGLARAKNLPVVLVGDIDRGGVLASLFGTWALLDDDDRALLAGYIVNKFRGDDAILAPGLEEITDRTGMPSFGVLPWVPGVWLDGEDALEVGRWRHEGDAVDPSSLRVAVVRFPRISNATDVDAMAGETGVDVQVTTNPDTCQAADVLVLPGSRSTVSDLEWLRRSGIADVVARRAEQGRTVVGICGGYQMLCRTILDPDGQETTPGSVVEGLGLLPVEVDFAATKTLALSHGTWRGIEVGGYEIHHGVCRSLEDAEAFLDGVHVGPVWGTMWHGAFEHDEFRRTWLADAARHAGSSWRPHSDELGYQARREAMIETLADALEAHVDVDRILHLVR.

The 178-residue stretch at 253 to 430 (SLRVAVVRFP…WHGAFEHDEF (178 aa)) folds into the GATase cobBQ-type domain. The Nucleophile role is filled by C334. The active site involves H422.

It belongs to the CobB/CobQ family. CobQ subfamily.

The protein operates within cofactor biosynthesis; adenosylcobalamin biosynthesis. Catalyzes amidations at positions B, D, E, and G on adenosylcobyrinic A,C-diamide. NH(2) groups are provided by glutamine, and one molecule of ATP is hydrogenolyzed for each amidation. The sequence is that of Cobyric acid synthase from Cutibacterium acnes (strain DSM 16379 / KPA171202) (Propionibacterium acnes).